Reading from the N-terminus, the 483-residue chain is Regulatory protein ViaA (483 aa).

Belongs to the ViaA family. Homodimer. Interacts with RavA.

The protein localises to the cytoplasm. Component of the RavA-ViaA chaperone complex, which may act on the membrane to optimize the function of some of the respiratory chains. ViaA stimulates the ATPase activity of RavA. In Escherichia fergusonii (strain ATCC 35469 / DSM 13698 / CCUG 18766 / IAM 14443 / JCM 21226 / LMG 7866 / NBRC 102419 / NCTC 12128 / CDC 0568-73), this protein is Regulatory protein ViaA.